Consider the following 793-residue polypeptide: Spindle and centriole-associated protein 1 (793 aa).

The segment at 1-29 is disordered; that stretch reads MSYLRASRTSSNLSLAKKPSKTRKKLQAR. A compositionally biased stretch (basic residues) spans 18-27; the sequence is KPSKTRKKLQ. A coiled-coil region spans residues 312–405; that stretch reads SLGLLNSMIM…LTAEILSLKE (94 aa). Positions 519 to 542 are disordered; that stretch reads KTVGNLSSHSAVPKRAANRLPSPP. The stretch at 622-712 forms a coiled coil; the sequence is LQNEDLVSQM…LLKLIEQQKQ (91 aa). The span at 718 to 739 shows a compositional bias: polar residues; that stretch reads PTLSPITPQGRRTGSSLDTTPL. A disordered region spans residues 718–783; it reads PTLSPITPQG…RSQAANDRGE (66 aa). Residues 740 to 753 are compositionally biased toward low complexity; the sequence is SSCSTSGRRSSGAS. A compositionally biased stretch (polar residues) spans 754–778; it reads NKSESISTSVGSLRSASTGRRSQAA.

The protein resides in the cytoplasm. Its subcellular location is the cytoskeleton. It is found in the microtubule organizing center. It localises to the centrosome. The protein localises to the centriole. The protein resides in the spindle. Functionally, regulator required for centriole duplication. This Xenopus laevis (African clawed frog) protein is Spindle and centriole-associated protein 1 (spice1).